A 255-amino-acid chain; its full sequence is Protein SCO2 homolog, mitochondrial (255 aa).

A mitochondrion-targeting transit peptide spans Met-1–Arg-41. Residues Gln-42 to Arg-49 are Mitochondrial matrix-facing. The chain crosses the membrane as a helical span at residues Leu-50–Ala-67. At Arg-68–Pro-255 the chain is on the mitochondrial intermembrane side. In terms of domain architecture, Thioredoxin spans Trp-74 to Ala-248. 3 residues coordinate Cu cation: Cys-122, Cys-126, and His-213. A disulfide bridge links Cys-122 with Cys-126.

The protein belongs to the SCO1/2 family. As to quaternary structure, homodimer. Interacts with COA6. Found in a complex with TMEM177, COX20, COA6, MT-CO2/COX2, COX18 and SCO1. Interacts with TMEM177 in a COX20-dependent manner. Interacts with COX20 in a MT-CO2/COX2- and COX18-dependent manner. Interacts with COX16. Expressed in retina, retinal pigment epithelium, and sclera.

The protein localises to the mitochondrion inner membrane. Copper metallochaperone essential for the synthesis and maturation of cytochrome c oxidase subunit II (MT-CO2/COX2) by facilitating the incorporation of copper into the Cu(A) site of MT-CO2/COX2. Could also act as a thiol-disulfide oxidoreductase to regulate the redox state of the cysteines in SCO1 during maturation of MT-CO2/COX2. The sequence is that of Protein SCO2 homolog, mitochondrial (Sco2) from Mus musculus (Mouse).